Reading from the N-terminus, the 523-residue chain is Synaptotagmin-10 (523 aa).

The Vesicular portion of the chain corresponds to Met-1–Ser-55. The interval Cys-13 to Ser-35 is cysteine motif. A helical transmembrane segment spans residues Leu-56–Phe-76. Topologically, residues Trp-77 to Pro-523 are cytoplasmic. A Phosphothreonine modification is found at Thr-136. C2 domains are found at residues Ile-231 to Lys-352 and Asp-363 to His-496. Ca(2+)-binding residues include Asp-262, Asp-268, Asp-320, Phe-321, Asp-322, Ser-325, Asp-328, Asp-394, Asp-400, Asp-454, and Asp-456.

The protein belongs to the synaptotagmin family. As to quaternary structure, homodimer; disulfide-linked via the cysteine motif. Can also form heterodimers with SYT3, SYT6, SYT7 and SYT9. Ca(2+) is required as a cofactor. As to expression, expressed only in pancreas, lung and kidney.

The protein resides in the cytoplasmic vesicle. It is found in the secretory vesicle membrane. Ca(2+) sensor specifically required for the Ca(2+)-dependent exocytosis of secretory vesicles containing IGF1 in neurons of the olfactory bulb. Exocytosis of IGF1 is required for sensory perception of smell. Not involved in Ca(2+)-dependent synaptic vesicle exocytosis. Acts through Ca(2+) and phospholipid binding to the C2 domain: Ca(2+) induces binding of the C2-domains to phospholipid membranes and to assembled SNARE-complexes; both actions contribute to triggering exocytosis. The polypeptide is Synaptotagmin-10 (SYT10) (Homo sapiens (Human)).